Here is a 220-residue protein sequence, read N- to C-terminus: MDLKQIAGEYAATFVKDGMKIGLGTGSTAYWTIQKLGQRVKEGLSIQAVPTSKETEALAQQLNIPLISLNDVQSLDLTIDGADEIDSNLQLIKGGGGALLREKIVASSSKELIIIIDESKVVTRLGTFPLPIEIIPFAWKQTESKIQSLGCQTTLRLKNNETFITDNNNMIIDCIFPNHIPTPSDLHKRLKMITGVVETGLFVNMTSKAIIGTKNGIQEL.

Residues 25 to 28, 80 to 83, and 93 to 96 each bind substrate; these read TGST, DGAD, and KGGG. Catalysis depends on E102, which acts as the Proton acceptor. K120 is a substrate binding site.

This sequence belongs to the ribose 5-phosphate isomerase family. Homodimer.

It carries out the reaction aldehydo-D-ribose 5-phosphate = D-ribulose 5-phosphate. It functions in the pathway carbohydrate degradation; pentose phosphate pathway; D-ribose 5-phosphate from D-ribulose 5-phosphate (non-oxidative stage): step 1/1. Its function is as follows. Catalyzes the reversible conversion of ribose-5-phosphate to ribulose 5-phosphate. The chain is Ribose-5-phosphate isomerase A from Bacillus cereus (strain ZK / E33L).